A 267-amino-acid chain; its full sequence is tRNA-cytidine(32) 2-sulfurtransferase (267 aa).

The short motif at 37 to 42 (SGGKDS) is the PP-loop motif element. [4Fe-4S] cluster-binding residues include cysteine 112, cysteine 115, and cysteine 203.

This sequence belongs to the TtcA family. In terms of assembly, homodimer. Mg(2+) is required as a cofactor. Requires [4Fe-4S] cluster as cofactor.

It localises to the cytoplasm. It catalyses the reaction cytidine(32) in tRNA + S-sulfanyl-L-cysteinyl-[cysteine desulfurase] + AH2 + ATP = 2-thiocytidine(32) in tRNA + L-cysteinyl-[cysteine desulfurase] + A + AMP + diphosphate + H(+). It functions in the pathway tRNA modification. Functionally, catalyzes the ATP-dependent 2-thiolation of cytidine in position 32 of tRNA, to form 2-thiocytidine (s(2)C32). The sulfur atoms are provided by the cysteine/cysteine desulfurase (IscS) system. This chain is tRNA-cytidine(32) 2-sulfurtransferase, found in Dichelobacter nodosus (strain VCS1703A).